We begin with the raw amino-acid sequence, 127 residues long: Large ribosomal subunit protein bL12 (127 aa).

The interval 93-127 (LVDEAPNPVSEGVSREEADDLKAQIEDAGGEVELQ) is disordered. Residues 105-117 (VSREEADDLKAQI) show a composition bias toward basic and acidic residues.

This sequence belongs to the bacterial ribosomal protein bL12 family. As to quaternary structure, homodimer. Part of the ribosomal stalk of the 50S ribosomal subunit. Forms a multimeric L10(L12)X complex, where L10 forms an elongated spine to which 2 to 4 L12 dimers bind in a sequential fashion. Binds GTP-bound translation factors.

Its function is as follows. Forms part of the ribosomal stalk which helps the ribosome interact with GTP-bound translation factors. Is thus essential for accurate translation. The polypeptide is Large ribosomal subunit protein bL12 (Salinibacter ruber (strain DSM 13855 / M31)).